The following is a 470-amino-acid chain: Ribulose bisphosphate carboxylase large chain (470 aa).

Residues N115 and T165 each contribute to the substrate site. K167 functions as the Proton acceptor in the catalytic mechanism. K169 is a substrate binding site. Mg(2+) contacts are provided by K193, D195, and E196. K193 carries the N6-carboxylysine modification. The Proton acceptor role is filled by H286. Residues R287, H319, and S371 each contribute to the substrate site.

This sequence belongs to the RuBisCO large chain family. Type I subfamily. Heterohexadecamer of 8 large chains and 8 small chains. Mg(2+) is required as a cofactor.

It is found in the carboxysome. It catalyses the reaction 2 (2R)-3-phosphoglycerate + 2 H(+) = D-ribulose 1,5-bisphosphate + CO2 + H2O. The enzyme catalyses D-ribulose 1,5-bisphosphate + O2 = 2-phosphoglycolate + (2R)-3-phosphoglycerate + 2 H(+). Its function is as follows. RuBisCO catalyzes two reactions: the carboxylation of D-ribulose 1,5-bisphosphate, the primary event in carbon dioxide fixation, as well as the oxidative fragmentation of the pentose substrate in the photorespiration process. Both reactions occur simultaneously and in competition at the same active site. This is Ribulose bisphosphate carboxylase large chain from Prochlorococcus marinus (strain SARG / CCMP1375 / SS120).